The chain runs to 98 residues: Carboxysome shell protein CsoS1C (98 aa).

Residues 8–93 (ALGMIETRGL…VHSEVENILP (86 aa)) form the BMC domain.

This sequence belongs to the bacterial microcompartments protein family. CsoS1 subfamily. As to quaternary structure, homohexamer with a small central pore. Interacts with the N-terminus (residues 1-136) of RuBisCO (CbbL).

Its subcellular location is the carboxysome. One of shell proteins of the carboxysome, a polyhedral inclusion where RuBisCO (ribulose bisphosphate carboxylase, ccbL-ccbS) is sequestered. Assembles into hexamers which make sheets that form the facets of the polyhedral carboxysome. The shell probably limits the diffusion of CO(2) into and out of the carboxysome. There are estimated to be 2970 CsoS1A/CsoS1C proteins per carboxysome (the proteins differ by only 1 residue). Functionally, unlike beta-carboxysomes, alpha-carboxysomes (Cb) can form without cargo protein. CsoS2 is essential for Cb formation and is also capable of targeting foreign proteins to the Cb. The Cb shell assembles with the aid of CsoS2; CsoS1A, CsoS1B and CsoS1C form the majority of the shell while CsoS4A and CsoS4B form vertices. CsoS1D forms pseudohexamers that probably control metabolite flux into and out of the shell. This chain is Carboxysome shell protein CsoS1C, found in Halothiobacillus neapolitanus (strain ATCC 23641 / c2) (Thiobacillus neapolitanus).